The following is a 336-amino-acid chain: Holliday junction branch migration complex subunit RuvB (336 aa).

Residues 4 to 184 are large ATPase domain (RuvB-L); the sequence is SDRLISSQSI…FGIVQRLEYY (181 aa). Residues isoleucine 23, arginine 24, glycine 65, lysine 68, threonine 69, threonine 70, 131–133, arginine 174, tyrosine 184, and arginine 221 each bind ATP; that span reads EDY. Threonine 69 serves as a coordination point for Mg(2+). The small ATPAse domain (RuvB-S) stretch occupies residues 185-255; sequence SVDSLTKIVA…MAQQALEMLE (71 aa). The head domain (RuvB-H) stretch occupies residues 258 to 336; sequence QHGFDLMDRK…HFGFSAIEQE (79 aa). Residues arginine 313 and arginine 318 each coordinate DNA.

Belongs to the RuvB family. As to quaternary structure, homohexamer. Forms an RuvA(8)-RuvB(12)-Holliday junction (HJ) complex. HJ DNA is sandwiched between 2 RuvA tetramers; dsDNA enters through RuvA and exits via RuvB. An RuvB hexamer assembles on each DNA strand where it exits the tetramer. Each RuvB hexamer is contacted by two RuvA subunits (via domain III) on 2 adjacent RuvB subunits; this complex drives branch migration. In the full resolvosome a probable DNA-RuvA(4)-RuvB(12)-RuvC(2) complex forms which resolves the HJ.

It is found in the cytoplasm. It carries out the reaction ATP + H2O = ADP + phosphate + H(+). Its function is as follows. The RuvA-RuvB-RuvC complex processes Holliday junction (HJ) DNA during genetic recombination and DNA repair, while the RuvA-RuvB complex plays an important role in the rescue of blocked DNA replication forks via replication fork reversal (RFR). RuvA specifically binds to HJ cruciform DNA, conferring on it an open structure. The RuvB hexamer acts as an ATP-dependent pump, pulling dsDNA into and through the RuvAB complex. RuvB forms 2 homohexamers on either side of HJ DNA bound by 1 or 2 RuvA tetramers; 4 subunits per hexamer contact DNA at a time. Coordinated motions by a converter formed by DNA-disengaged RuvB subunits stimulates ATP hydrolysis and nucleotide exchange. Immobilization of the converter enables RuvB to convert the ATP-contained energy into a lever motion, pulling 2 nucleotides of DNA out of the RuvA tetramer per ATP hydrolyzed, thus driving DNA branch migration. The RuvB motors rotate together with the DNA substrate, which together with the progressing nucleotide cycle form the mechanistic basis for DNA recombination by continuous HJ branch migration. Branch migration allows RuvC to scan DNA until it finds its consensus sequence, where it cleaves and resolves cruciform DNA. The chain is Holliday junction branch migration complex subunit RuvB from Legionella pneumophila (strain Paris).